Reading from the N-terminus, the 426-residue chain is Histidine--tRNA ligase (426 aa).

This sequence belongs to the class-II aminoacyl-tRNA synthetase family. As to quaternary structure, homodimer.

It is found in the cytoplasm. The enzyme catalyses tRNA(His) + L-histidine + ATP = L-histidyl-tRNA(His) + AMP + diphosphate + H(+). The sequence is that of Histidine--tRNA ligase from Streptococcus equi subsp. zooepidemicus (strain H70).